The sequence spans 348 residues: tRNA N6-adenosine threonylcarbamoyltransferase (348 aa).

Fe cation contacts are provided by His111 and His115. Substrate contacts are provided by residues 134–138 (LVSGG), Asp167, Gly180, and Asn276. Asp304 provides a ligand contact to Fe cation.

This sequence belongs to the KAE1 / TsaD family. It depends on Fe(2+) as a cofactor.

The protein resides in the cytoplasm. The catalysed reaction is L-threonylcarbamoyladenylate + adenosine(37) in tRNA = N(6)-L-threonylcarbamoyladenosine(37) in tRNA + AMP + H(+). Its function is as follows. Required for the formation of a threonylcarbamoyl group on adenosine at position 37 (t(6)A37) in tRNAs that read codons beginning with adenine. Is involved in the transfer of the threonylcarbamoyl moiety of threonylcarbamoyl-AMP (TC-AMP) to the N6 group of A37, together with TsaE and TsaB. TsaD likely plays a direct catalytic role in this reaction. The sequence is that of tRNA N6-adenosine threonylcarbamoyltransferase from Bordetella petrii (strain ATCC BAA-461 / DSM 12804 / CCUG 43448).